The following is a 268-amino-acid chain: Phosphate import ATP-binding protein PstB 2 (268 aa).

One can recognise an ABC transporter domain in the interval 22 to 263; that stretch reads MALTGVNFYY…PKVKRTEDYI (242 aa). 54–61 is an ATP binding site; the sequence is GPSGCGKS.

It belongs to the ABC transporter superfamily. Phosphate importer (TC 3.A.1.7) family. The complex is composed of two ATP-binding proteins (PstB), two transmembrane proteins (PstC and PstA) and a solute-binding protein (PstS).

It localises to the cell inner membrane. It carries out the reaction phosphate(out) + ATP + H2O = ADP + 2 phosphate(in) + H(+). In terms of biological role, part of the ABC transporter complex PstSACB involved in phosphate import. Responsible for energy coupling to the transport system. The sequence is that of Phosphate import ATP-binding protein PstB 2 from Rhizobium johnstonii (strain DSM 114642 / LMG 32736 / 3841) (Rhizobium leguminosarum bv. viciae).